A 71-amino-acid polypeptide reads, in one-letter code: Small ribosomal subunit protein bS21 (71 aa).

The protein belongs to the bacterial ribosomal protein bS21 family.

This is Small ribosomal subunit protein bS21 from Buchnera aphidicola subsp. Acyrthosiphon pisum (strain 5A).